Consider the following 62-residue polypeptide: Ribulose bisphosphate carboxylase/oxygenase activase, chloroplastic (62 aa).

The protein belongs to the RuBisCO activase family.

The protein resides in the plastid. The protein localises to the chloroplast stroma. Activation of RuBisCO (ribulose-1,5-bisphosphate carboxylase/oxygenase; EC 4.1.1.39) involves the ATP-dependent carboxylation of the epsilon-amino group of lysine leading to a carbamate structure. The protein is Ribulose bisphosphate carboxylase/oxygenase activase, chloroplastic of Vitis sp. (Grape).